Consider the following 540-residue polypeptide: MAHKKTYSQLRSELLARYPVGLTKGGVSIDDIVQLRLQSPYESHLDVARAMASVMRADMAAYDRDTGKFTQSLGCWSGFHAQQMIKAVKRLRGTTKGAYVYLSGWMVAGLRNRWGHLPDQSMHEKTSVVDLIEEIYVSLRQADEVALNDLFNELKDARAKGATNKACEEIISRIDGFESHVVPIIADIDAGFGNEHATYLLAKEMIKAGACCLQIENQVSDAKQCGHQDGKVTVPREDFIEKLRACRLAFEELGVDDGVIVARTDSLGASLTQKIPVSQQAGDFASSYIKWLKTEPITDANPLSEGELAIWQSGNFARPIRMPNGLFSFREGTGRARVIEDCIASLKDGDADLIWIETDTPNVDEIASMVAEIRKQVPDAKLVYNNSPSFNWTLNLRKQVRAQWISEGKIAEADYPDGTALMSAQYDTSELGREADDRLRQFQVDISARAGVFHNLITLPTFHLTAKSTDELSHGYFGEDRMLAYVATVQREEIRRSISAVRHQHEVGSDLGDTFKEMVSGDRALKAGGAHNTMNQFAAE.

103 to 105 serves as a coordination point for substrate; the sequence is SGW. Asp187 lines the Mg(2+) pocket. The active-site Proton acceptor is Cys225. Residues 226–227, 385–389, and Thr458 each bind substrate; these read GH and NNSPS.

The protein belongs to the isocitrate lyase/PEP mutase superfamily. Isocitrate lyase family. In terms of assembly, homotetramer. Requires Mg(2+) as cofactor.

The catalysed reaction is D-threo-isocitrate = glyoxylate + succinate. The protein operates within carbohydrate metabolism; glyoxylate cycle; (S)-malate from isocitrate: step 1/2. Its pathway is one-carbon metabolism; formaldehyde assimilation via serine pathway. With respect to regulation, in the presence of magnesium, inhibited by oxalate, potassium cyanide, manganese, silver, cadmium and to a lesser extent by succinate, glycolate, iodoacetamide, DL-penicillamine, aluminum, sodium, potassium, lithium and strontium. Its function is as follows. Involved in the metabolic adaptation in response to environmental changes. Catalyzes the reversible formation of succinate and glyoxylate from isocitrate, a key step of the glyoxylate cycle, which operates as an anaplerotic route for replenishing the tricarboxylic acid cycle during growth on fatty acid substrates. May be involved in the assimilation of one-carbon compounds via the isocitrate lyase-positive serine pathway. This is Isocitrate lyase from Hyphomicrobium methylovorum.